Reading from the N-terminus, the 299-residue chain is Putative adenosine/adenine deaminase (299 aa).

Residues His-16 and His-18 each coordinate Zn(2+). Residues His-18 and Gly-157 each contribute to the substrate site. His-184 is a Zn(2+) binding site. The Proton donor role is filled by Glu-187. Asp-265 contacts Zn(2+). Residue Asp-266 participates in substrate binding.

It belongs to the metallo-dependent hydrolases superfamily. Adenosine and AMP deaminases family. It depends on Zn(2+) as a cofactor.

Putative nucleoside deaminase. May catalyze the hydrolytic deamination of adenosine or some similar substrate and play a role in purine metabolism. This Treponema pallidum (strain Nichols) protein is Putative adenosine/adenine deaminase.